Reading from the N-terminus, the 274-residue chain is Large ribosomal subunit protein uL2cz/uL2cy (274 aa).

Positions 225–274 (PVDHPHGGGEGRAPIGRKKPVTPWGYPALGRRSRKRKKYSDNLILRRRTK) are disordered.

This sequence belongs to the universal ribosomal protein uL2 family. As to quaternary structure, part of the 50S ribosomal subunit.

It localises to the plastid. The protein localises to the chloroplast. The chain is Large ribosomal subunit protein uL2cz/uL2cy (rpl2-A) from Lotus japonicus (Lotus corniculatus var. japonicus).